The following is a 330-amino-acid chain: Tetraacyldisaccharide 4'-kinase (330 aa).

58 to 65 contributes to the ATP binding site; the sequence is TVGGSGKT.

This sequence belongs to the LpxK family.

The catalysed reaction is a lipid A disaccharide + ATP = a lipid IVA + ADP + H(+). The protein operates within glycolipid biosynthesis; lipid IV(A) biosynthesis; lipid IV(A) from (3R)-3-hydroxytetradecanoyl-[acyl-carrier-protein] and UDP-N-acetyl-alpha-D-glucosamine: step 6/6. Transfers the gamma-phosphate of ATP to the 4'-position of a tetraacyldisaccharide 1-phosphate intermediate (termed DS-1-P) to form tetraacyldisaccharide 1,4'-bis-phosphate (lipid IVA). This chain is Tetraacyldisaccharide 4'-kinase, found in Shewanella pealeana (strain ATCC 700345 / ANG-SQ1).